The following is a 68-amino-acid chain: DNA-directed RNA polymerase subunit Rpo10 (68 aa).

Zn(2+)-binding residues include C7, C10, C44, and C45.

Belongs to the archaeal Rpo10/eukaryotic RPB10 RNA polymerase subunit family. Part of the RNA polymerase complex. Requires Zn(2+) as cofactor.

It is found in the cytoplasm. The enzyme catalyses RNA(n) + a ribonucleoside 5'-triphosphate = RNA(n+1) + diphosphate. Its function is as follows. DNA-dependent RNA polymerase (RNAP) catalyzes the transcription of DNA into RNA using the four ribonucleoside triphosphates as substrates. This is DNA-directed RNA polymerase subunit Rpo10 from Methanococcus maripaludis (strain C6 / ATCC BAA-1332).